Consider the following 67-residue polypeptide: Large ribosomal subunit protein uL30 (67 aa).

Belongs to the universal ribosomal protein uL30 family. As to quaternary structure, part of the 50S ribosomal subunit.

The protein is Large ribosomal subunit protein uL30 of Sinorhizobium medicae (strain WSM419) (Ensifer medicae).